A 282-amino-acid chain; its full sequence is Protein canopy homolog 3 (282 aa).

The N-terminal stretch at 1–33 (MEPLPEPASGPRPRPHRLLLLSLLLLLLPLLPA) is a signal peptide. One can recognise a Saposin B-type domain in the interval 53-275 (SKCEVCKYVA…EGIQKASPLT (223 aa)). Cystine bridges form between Cys-55/Cys-212, Cys-58/Cys-200, and Cys-110/Cys-172. A glycan (N-linked (GlcNAc...) asparagine) is linked at Asn-159. Residues 159–185 (NETSAEVADLKKQCDVLVEEFEEVIED) adopt a coiled-coil conformation. Residues 221–282 (KGDTAALGGK…PLTHSPPDEL (62 aa)) are disordered. The span at 255-266 (DLDGDPSPEEDE) shows a compositional bias: acidic residues.

The protein belongs to the canopy family. Interacts with HSP90B1; this interaction is disrupted in the presence of ATP. Interacts with TLR1, TLR2, TLR4 and TLR9.

The protein localises to the endoplasmic reticulum. Toll-like receptor (TLR)-specific co-chaperone for HSP90B1. Required for proper TLR folding, except that of TLR3, and hence controls TLR exit from the endoplasmic reticulum. Consequently, required for both innate and adaptive immune responses. This is Protein canopy homolog 3 (CNPY3) from Bos taurus (Bovine).